We begin with the raw amino-acid sequence, 476 residues long: Cysteine--tRNA ligase (476 aa).

C28 contacts Zn(2+). The short motif at 30–40 is the 'HIGH' region element; the sequence is PTVYDHTHLGH. Zn(2+) is bound by residues C208, H233, and E237. The 'KMSKS' region signature appears at 265–269; sequence KMSKS. K268 is a binding site for ATP.

The protein belongs to the class-I aminoacyl-tRNA synthetase family. Zn(2+) serves as cofactor.

Its subcellular location is the cytoplasm. The catalysed reaction is tRNA(Cys) + L-cysteine + ATP = L-cysteinyl-tRNA(Cys) + AMP + diphosphate. The polypeptide is Cysteine--tRNA ligase (Methanococcus maripaludis (strain C6 / ATCC BAA-1332)).